Consider the following 484-residue polypeptide: Protein nucleotidyltransferase YdiU (484 aa).

ATP contacts are provided by G81, G83, R84, K103, D115, G116, R166, and R173. D244 acts as the Proton acceptor in catalysis. The Mg(2+) site is built by N245 and D254. D254 provides a ligand contact to ATP.

This sequence belongs to the SELO family. Mg(2+) serves as cofactor. Mn(2+) is required as a cofactor.

It carries out the reaction L-seryl-[protein] + ATP = 3-O-(5'-adenylyl)-L-seryl-[protein] + diphosphate. The catalysed reaction is L-threonyl-[protein] + ATP = 3-O-(5'-adenylyl)-L-threonyl-[protein] + diphosphate. It catalyses the reaction L-tyrosyl-[protein] + ATP = O-(5'-adenylyl)-L-tyrosyl-[protein] + diphosphate. The enzyme catalyses L-histidyl-[protein] + UTP = N(tele)-(5'-uridylyl)-L-histidyl-[protein] + diphosphate. It carries out the reaction L-seryl-[protein] + UTP = O-(5'-uridylyl)-L-seryl-[protein] + diphosphate. The catalysed reaction is L-tyrosyl-[protein] + UTP = O-(5'-uridylyl)-L-tyrosyl-[protein] + diphosphate. Its function is as follows. Nucleotidyltransferase involved in the post-translational modification of proteins. It can catalyze the addition of adenosine monophosphate (AMP) or uridine monophosphate (UMP) to a protein, resulting in modifications known as AMPylation and UMPylation. The sequence is that of Protein nucleotidyltransferase YdiU from Shewanella baltica (strain OS223).